We begin with the raw amino-acid sequence, 271 residues long: Bifunctional protein FolD (271 aa).

NADP(+) is bound by residues 154–156 (GRS), Thr181, and Ile222.

This sequence belongs to the tetrahydrofolate dehydrogenase/cyclohydrolase family. Homodimer.

It catalyses the reaction (6R)-5,10-methylene-5,6,7,8-tetrahydrofolate + NADP(+) = (6R)-5,10-methenyltetrahydrofolate + NADPH. The catalysed reaction is (6R)-5,10-methenyltetrahydrofolate + H2O = (6R)-10-formyltetrahydrofolate + H(+). It functions in the pathway one-carbon metabolism; tetrahydrofolate interconversion. Catalyzes the oxidation of 5,10-methylenetetrahydrofolate to 5,10-methenyltetrahydrofolate and then the hydrolysis of 5,10-methenyltetrahydrofolate to 10-formyltetrahydrofolate. The protein is Bifunctional protein FolD of Thermosipho africanus (strain TCF52B).